Reading from the N-terminus, the 504-residue chain is 2,3-bisphosphoglycerate-independent phosphoglycerate mutase (504 aa).

Mn(2+)-binding residues include aspartate 13 and serine 63. Serine 63 functions as the Phosphoserine intermediate in the catalytic mechanism. Substrate-binding positions include histidine 124, arginine 153–aspartate 154, arginine 183, arginine 189, arginine 254–arginine 257, and lysine 330. 5 residues coordinate Mn(2+): aspartate 397, histidine 401, aspartate 438, histidine 439, and histidine 457.

Belongs to the BPG-independent phosphoglycerate mutase family. Monomer. Mn(2+) serves as cofactor.

It catalyses the reaction (2R)-2-phosphoglycerate = (2R)-3-phosphoglycerate. Its pathway is carbohydrate degradation; glycolysis; pyruvate from D-glyceraldehyde 3-phosphate: step 3/5. Its function is as follows. Catalyzes the interconversion of 2-phosphoglycerate and 3-phosphoglycerate. This chain is 2,3-bisphosphoglycerate-independent phosphoglycerate mutase, found in Rhodopseudomonas palustris (strain ATCC BAA-98 / CGA009).